Consider the following 172-residue polypeptide: Myosin regulatory light polypeptide 9 (172 aa).

Residues 1–16 (MSSKRAKTKTTKKRPQ) show a composition bias toward basic residues. Positions 1-20 (MSSKRAKTKTTKKRPQRATS) are disordered. N-acetylserine is present on S2. Residue T19 is modified to Phosphothreonine; by MLCK, CIT and ROCK2. Phosphoserine; by CDC42BP, CIT, MLCK, PAK1, ROCK1, ROCK2, DAPK1, DAPK2 and ZIPK/DAPK3 is present on S20. EF-hand domains lie at 29-64 (SQIQEFKEAFNMIDQNRDGFIDKEDLHDMLASLGKN), 98-133 (DPEDVIRNAFACFDEEATGTIQEDYLRELLTTMGDR), and 134-169 (FTDEEVDELYREAPIDKKGNFNYIEFTRILKHGAKD). Residues D42, N44, D46, and D53 each contribute to the Ca(2+) site.

As to quaternary structure, myosin is a hexamer of 2 heavy chains and 4 light chains: interacts with myosin heavy chain MYO19. Interacts with LUZP1; the interaction results in inhibition of phosphorylation of MYL9 by DAPK3. In terms of processing, phosphorylation increases the actin-activated myosin ATPase activity and thereby regulates the contractile activity. It is required to generate the driving force in the migration of the cells but not necessary for localization of myosin-2 at the leading edge. Phosphorylation is required for myotube formation. Phosphorylated by DAPK3; DAPK3-mediated phosphorylation is inhibited by LUZP1.

It is found in the cytoplasm. Its subcellular location is the cytoskeleton. The protein localises to the cell cortex. Myosin regulatory subunit that plays an important role in regulation of both smooth muscle and nonmuscle cell contractile activity via its phosphorylation. Implicated in cytokinesis, receptor capping, and cell locomotion. In myoblasts, may regulate PIEZO1-dependent cortical actomyosin assembly involved in myotube formation. The chain is Myosin regulatory light polypeptide 9 (MYL9) from Bos taurus (Bovine).